The primary structure comprises 375 residues: DNA replication and repair protein RecF (375 aa).

30–37 (GKNAQGKT) is an ATP binding site.

Belongs to the RecF family.

It is found in the cytoplasm. Functionally, the RecF protein is involved in DNA metabolism; it is required for DNA replication and normal SOS inducibility. RecF binds preferentially to single-stranded, linear DNA. It also seems to bind ATP. The polypeptide is DNA replication and repair protein RecF (Lactobacillus acidophilus (strain ATCC 700396 / NCK56 / N2 / NCFM)).